Reading from the N-terminus, the 225-residue chain is Uracil-DNA glycosylase (225 aa).

The active-site Proton acceptor is the aspartate 68.

It belongs to the uracil-DNA glycosylase (UDG) superfamily. UNG family.

It localises to the cytoplasm. The catalysed reaction is Hydrolyzes single-stranded DNA or mismatched double-stranded DNA and polynucleotides, releasing free uracil.. In terms of biological role, excises uracil residues from the DNA which can arise as a result of misincorporation of dUMP residues by DNA polymerase or due to deamination of cytosine. This chain is Uracil-DNA glycosylase, found in Mycolicibacterium vanbaalenii (strain DSM 7251 / JCM 13017 / BCRC 16820 / KCTC 9966 / NRRL B-24157 / PYR-1) (Mycobacterium vanbaalenii).